A 136-amino-acid polypeptide reads, in one-letter code: Large ribosomal subunit protein eL27 (136 aa).

The KOW domain occupies 5 to 40 (MKPGKVVLVLAGRYSGRKAVIVKNIDDGTSDRPYSH). N6-acetyllysine occurs at positions 27 and 93.

Belongs to the eukaryotic ribosomal protein eL27 family. In terms of assembly, component of the large ribosomal subunit. Interacts with RRP1B. Component of the large ribosomal subunit. Interacts with RRP1B. Interacts with DHX33.

It localises to the cytoplasm. Its subcellular location is the cytosol. The protein localises to the rough endoplasmic reticulum. In terms of biological role, component of the large ribosomal subunit. Required for proper rRNA processing and maturation of 28S and 5.8S rRNAs. This is Large ribosomal subunit protein eL27 (RPL27) from Bos taurus (Bovine).